Consider the following 95-residue polypeptide: Small ribosomal subunit protein uS19 (95 aa).

This sequence belongs to the universal ribosomal protein uS19 family.

Functionally, protein S19 forms a complex with S13 that binds strongly to the 16S ribosomal RNA. The polypeptide is Small ribosomal subunit protein uS19 (rpsS) (Treponema pallidum (strain Nichols)).